The following is a 407-amino-acid chain: Leucine-rich repeat-containing protein 42 (407 aa).

LRR repeat units lie at residues 138–159 (VLKS…EEIR), 163–184 (SLEC…FKYI), 191–211 (SLVK…QRLT), 223–243 (NLQL…RYLT), and 247–268 (TLQK…KGFF). Residues 360–389 (VQSSPSGETHSTHKSRKRRLSTEEEQSAAP) are disordered.

It belongs to the LRRC42 family.

The chain is Leucine-rich repeat-containing protein 42 (lrrc42) from Danio rerio (Zebrafish).